The primary structure comprises 467 residues: Involucrin (467 aa).

Residues 48–467 are disordered; the sequence is EIQEKGFPKH…ELENRTQQEK (420 aa). A compositionally biased stretch (basic and acidic residues) spans 49-75; sequence IQEKGFPKHEEKRPNPVKDLPDQKCEH. Composition is skewed to low complexity over residues 76-95 and 105-177; these read QQQP…QQEL and QQLP…VPQE. Composition is skewed to basic and acidic residues over residues 178 to 192 and 220 to 231; these read LHLR…DPEL and RHQEPQEQELHL. Residues 278-290 are compositionally biased toward low complexity; it reads QQQQESPEPELQL. Composition is skewed to basic and acidic residues over residues 295-318, 348-373, 380-391, 415-437, and 450-467; these read QSHE…ELYL, LEEK…HEPD, EKQKLGEPELHL, KQEK…KELS, and KQLE…QQEK.

This sequence belongs to the involucrin family. As to quaternary structure, directly or indirectly cross-linked to cornifelin (CNFN). In terms of processing, substrate of transglutaminase. Specific glutamines or lysines are cross-linked to keratins, desmoplakin and to inter involucrin molecules. Keratinocytes of epidermis and other stratified squamous epithelia.

The protein resides in the cytoplasm. Part of the insoluble cornified cell envelope (CE) of stratified squamous epithelia. The protein is Involucrin (Ivl) of Mus musculus (Mouse).